The following is an 83-amino-acid chain: U25-theraphotoxin-Cg1b (83 aa).

A signal peptide spans 1 to 23 (MRFHTLLFLSFLLLVSCALICTA). The propeptide occupies 24–48 (QHPGLEKSGMFHENVGKGQHIEEKR). 3 disulfides stabilise this stretch: Cys50/Cys66, Cys57/Cys71, and Cys65/Cys79.

The protein belongs to the neurotoxin 07 (Beta/delta-agtx) family. 03 (aga-4) subfamily. JZTX sub-subfamily. In terms of tissue distribution, expressed by the venom gland.

Its subcellular location is the secreted. Its function is as follows. Probable ion channel inhibitor. This chain is U25-theraphotoxin-Cg1b, found in Chilobrachys guangxiensis (Chinese earth tiger tarantula).